We begin with the raw amino-acid sequence, 386 residues long: Succinate--CoA ligase [ADP-forming] subunit beta (386 aa).

Positions 9 to 244 (KELLRDYGVP…LNEEDEKEIE (236 aa)) constitute an ATP-grasp domain. Residues K46, 53–55 (GRG), E99, C102, and E107 each bind ATP. Residues N199 and D213 each contribute to the Mg(2+) site. Substrate-binding positions include N264 and 321-323 (GIM).

It belongs to the succinate/malate CoA ligase beta subunit family. Heterotetramer of two alpha and two beta subunits. Mg(2+) serves as cofactor.

The enzyme catalyses succinate + ATP + CoA = succinyl-CoA + ADP + phosphate. It catalyses the reaction GTP + succinate + CoA = succinyl-CoA + GDP + phosphate. It participates in carbohydrate metabolism; tricarboxylic acid cycle; succinate from succinyl-CoA (ligase route): step 1/1. Succinyl-CoA synthetase functions in the citric acid cycle (TCA), coupling the hydrolysis of succinyl-CoA to the synthesis of either ATP or GTP and thus represents the only step of substrate-level phosphorylation in the TCA. The beta subunit provides nucleotide specificity of the enzyme and binds the substrate succinate, while the binding sites for coenzyme A and phosphate are found in the alpha subunit. In Alkaliphilus oremlandii (strain OhILAs) (Clostridium oremlandii (strain OhILAs)), this protein is Succinate--CoA ligase [ADP-forming] subunit beta.